Consider the following 90-residue polypeptide: Small ribosomal subunit protein uS15c (90 aa).

It belongs to the universal ribosomal protein uS15 family. Part of the 30S ribosomal subunit.

The protein resides in the plastid. It is found in the chloroplast. The sequence is that of Small ribosomal subunit protein uS15c (rps15) from Piper cenocladum (Ant piper).